A 180-amino-acid chain; its full sequence is uncharacterized protein (180 aa).

Residues Leu35–Leu163 enclose the Nudix hydrolase domain. The Nudix box motif lies at Gly72–Gly94. The Mg(2+) site is built by Glu88 and Glu92.

This sequence belongs to the Nudix hydrolase family. It depends on Mg(2+) as a cofactor.

This is an uncharacterized protein from Escherichia coli O157:H7.